Here is a 308-residue protein sequence, read N- to C-terminus: F420-non-reducing hydrogenase subunit G (308 aa).

The protein belongs to the [NiFe]/[NiFeSe] hydrogenase small subunit family. The F420-non-reducing hydrogenase is composed of three subunits; MvhA, MvhD and MvhG. It forms a complex with the heterodisulfide reductase (hdr).

In terms of biological role, part of a complex that provides reducing equivalents for heterodisulfide reductase. The protein is F420-non-reducing hydrogenase subunit G (mvhG) of Methanothermobacter marburgensis (strain ATCC BAA-927 / DSM 2133 / JCM 14651 / NBRC 100331 / OCM 82 / Marburg) (Methanobacterium thermoautotrophicum).